A 500-amino-acid polypeptide reads, in one-letter code: Flt3-interacting zinc finger protein 1 (500 aa).

Methionine 1 bears the N-acetylmethionine mark. The segment at 1–24 (MEDSSLPVVPAPIAAPGPAPSATA) is disordered. Residues 9–19 (VPAPIAAPGPA) are compositionally biased toward pro residues. C2H2-type zinc fingers lie at residues 29-51 (FHCSECGKSFRYRSDLRRHFARH), 57-79 (HACPRCGKGFKHSFNLANHLRSH), 85-107 (YRCSACPKGFRDSTGLLHHQVVH), 113-136 (YCCLVCELRFSSRSSLGRHLKRQH), 204-226 (FACGACARRFDHGRELAAHWAAH), and 232-254 (FKCPRCERDFNAPALLERHKLTH). 2 disordered regions span residues 255–284 (DLQGSNAPPTQVWASGGGPEVAGEGDASEV) and 306–328 (KLEALLPGDEGSGNDQAPAAAAE). Polar residues predominate over residues 256-267 (LQGSNAPPTQVW). 5 consecutive C2H2-type zinc fingers follow at residues 336–357 (YQCDCGTFFASAPALASHLEAH), 363–386 (YGCGHCGALYAALAALEEHRRASH), 418–440 (FGCSECEKLFRSPRDLERHVLVH), 446–468 (FPCLECGKFFRHECYLKRHRLLH), and 474–496 (FPCHICGKGFITLSNLSRHLKLH). The disordered stretch occupies residues 383-415 (RASHGEGSGEAAPDGEGNQAAGGPGPGSSSRSK).

In terms of assembly, interacts with FLT3 cytoplasmic catalytic domain, following receptor stimulation, in a kinase-independent manner. Does not interact with other structurally related receptor tyrosine kinases, including KIT, CSF1R and PDGFR. Interacts with NRL. In terms of tissue distribution, widely expressed. In the retina, highest expression in the ganglion cell layer.

It localises to the cytoplasm. The protein resides in the nucleus. In terms of biological role, may be a transcriptional repressor of NRL function in photoreceptors. Does not repress CRX-mediated transactivation. This Mus musculus (Mouse) protein is Flt3-interacting zinc finger protein 1 (Fiz1).